The primary structure comprises 435 residues: NAD-specific glutamate dehydrogenase A (435 aa).

Residues 1–28 (MTMASKSDSTHDESGDEAADSTEPESAL) are disordered. The segment covering 14–23 (SGDEAADSTE) has biased composition (acidic residues). Lys126 is a catalytic residue.

It belongs to the Glu/Leu/Phe/Val dehydrogenases family. Homohexamer. The N-terminus is blocked.

It catalyses the reaction L-glutamate + NAD(+) + H2O = 2-oxoglutarate + NH4(+) + NADH + H(+). Inhibited by ethanol, acetone, acetonitrile and 2-propanol (65 to 70% inhibition) and to a lesser extent by methanol and dimethyl formamide (26 and 49 % inhibition respectively). No effect of glycerol or DMSO. This is NAD-specific glutamate dehydrogenase A (gdhX) from Halobacterium salinarum (Halobacterium halobium).